Here is a 405-residue protein sequence, read N- to C-terminus: Mitochondrial outer membrane protein SLC25A46 (405 aa).

Positions 1 to 77 are disordered; the sequence is MTSRRPDSFE…PDEAQSAAPP (77 aa). Residues 22-37 are compositionally biased toward low complexity; it reads FSGGYSGRSFNNSSSS. The Solcar 1 repeat unit spans residues 80–171; it reads QLNRFAGFGI…GIISECTPLP (92 aa). 6 consecutive transmembrane segments (helical) span residues 87–107, 151–171, 183–203, 242–262, 302–322, and 371–391; these read FGIGLASLFTENVLAHPCIVF, FVVQGVTLGTEGIISECTPLP, VVGHLVLKGLTYVVAMPFYSA, LLPLWNLVLPTVLHGILHYII, FPELMASFAASLCADVLLFPL, and MGFYKGFGSIVVQYSLHATVL. One copy of the Solcar 2 repeat lies at 299-401; the sequence is DAYFPELMAS…QITKMIYSTL (103 aa).

The protein belongs to the mitochondrial carrier (TC 2.A.29) family.

It is found in the mitochondrion outer membrane. In terms of biological role, transmembrane protein of the mitochondrial outer membrane that controls mitochondrial organization. May regulate the biogenesis and dynamics of mitochondrial cristae, the inwards folds of the inner mitochondrial membrane. Could regulate mitochondrial lipid homeostasis and thereby mitochondrial fission. This chain is Mitochondrial outer membrane protein SLC25A46 (slc25a46), found in Danio rerio (Zebrafish).